The chain runs to 109 residues: Parvalbumin alpha (109 aa).

2 consecutive EF-hand domains span residues 38–73 (KSKE…FTPE) and 77–109 (LSDK…VSES). Residues Asp-51, Asp-53, Ser-55, Phe-57, Glu-59, Glu-62, Asp-90, Asp-92, Asp-94, Lys-96, and Glu-101 each contribute to the Ca(2+) site.

The protein belongs to the parvalbumin family.

Its function is as follows. In muscle, parvalbumin is thought to be involved in relaxation after contraction. It binds two calcium ions. The sequence is that of Parvalbumin alpha from Pelophylax lessonae (Pool frog).